The sequence spans 122 residues: Large ribosomal subunit protein uL14 (122 aa).

Belongs to the universal ribosomal protein uL14 family. In terms of assembly, part of the 50S ribosomal subunit. Forms a cluster with proteins L3 and L19. In the 70S ribosome, L14 and L19 interact and together make contacts with the 16S rRNA in bridges B5 and B8.

Its function is as follows. Binds to 23S rRNA. Forms part of two intersubunit bridges in the 70S ribosome. The chain is Large ribosomal subunit protein uL14 from Treponema denticola (strain ATCC 35405 / DSM 14222 / CIP 103919 / JCM 8153 / KCTC 15104).